A 505-amino-acid polypeptide reads, in one-letter code: Catalase (505 aa).

Active-site residues include histidine 58 and asparagine 131. Residue tyrosine 341 coordinates heme.

Belongs to the catalase family. Requires heme as cofactor.

It carries out the reaction 2 H2O2 = O2 + 2 H2O. Its function is as follows. Decomposes hydrogen peroxide into water and oxygen; serves to protect cells from the toxic effects of hydrogen peroxide. This is Catalase (kat) from Methanosarcina barkeri (strain Fusaro / DSM 804).